The chain runs to 271 residues: Neurexophilin-1 (271 aa).

Residues 1–21 form the signal peptide; that stretch reads MQAACWYVLFLLQPTVYLVTC. An II region spans residues 22–97; sequence ANLTNGGKSE…WDWLRNSTDL (76 aa). N-linked (GlcNAc...) asparagine glycosylation is found at Asn-23, Asn-68, Asn-93, Asn-146, Asn-156, and Asn-162. The segment at 98-176 is III; the sequence is QEPRPRAKRR…LVPPTKIVEF (79 aa). Positions 177-185 are IV (linker domain); the sequence is DLAQQTVID. The interval 186–271 is v (Cys-rich); that stretch reads AKDSKSFNCR…HSDTPYFPSG (86 aa).

It belongs to the neurexophilin family.

The protein resides in the secreted. Functionally, may be signaling molecules that resemble neuropeptides and that act by binding to alpha-neurexins and possibly other receptors. This Homo sapiens (Human) protein is Neurexophilin-1 (NXPH1).